Reading from the N-terminus, the 1374-residue chain is DNA-directed RNA polymerase subunit beta (1374 aa).

The protein belongs to the RNA polymerase beta chain family. In terms of assembly, the RNAP catalytic core consists of 2 alpha, 1 beta, 1 beta' and 1 omega subunit. When a sigma factor is associated with the core the holoenzyme is formed, which can initiate transcription.

The catalysed reaction is RNA(n) + a ribonucleoside 5'-triphosphate = RNA(n+1) + diphosphate. Functionally, DNA-dependent RNA polymerase catalyzes the transcription of DNA into RNA using the four ribonucleoside triphosphates as substrates. The polypeptide is DNA-directed RNA polymerase subunit beta (Rickettsia prowazekii (strain Madrid E)).